The sequence spans 132 residues: uncharacterized protein (132 aa).

An N-terminal signal peptide occupies residues 1–25 (MRFTKVVGFLSVLGLAAVFPLTAQA).

This is an uncharacterized protein from Bacillus subtilis (strain 168).